The sequence spans 302 residues: Succinate--CoA ligase [ADP-forming] subunit alpha (302 aa).

Residues 17–20, Lys-43, and 96–98 contribute to the CoA site; these read TGST and ITE. Position 159 (Tyr-159) interacts with substrate. The active-site Tele-phosphohistidine intermediate is the His-247.

This sequence belongs to the succinate/malate CoA ligase alpha subunit family. As to quaternary structure, heterotetramer of two alpha and two beta subunits.

The catalysed reaction is succinate + ATP + CoA = succinyl-CoA + ADP + phosphate. It catalyses the reaction GTP + succinate + CoA = succinyl-CoA + GDP + phosphate. Its pathway is carbohydrate metabolism; tricarboxylic acid cycle; succinate from succinyl-CoA (ligase route): step 1/1. Its function is as follows. Succinyl-CoA synthetase functions in the citric acid cycle (TCA), coupling the hydrolysis of succinyl-CoA to the synthesis of either ATP or GTP and thus represents the only step of substrate-level phosphorylation in the TCA. The alpha subunit of the enzyme binds the substrates coenzyme A and phosphate, while succinate binding and nucleotide specificity is provided by the beta subunit. This Staphylococcus aureus (strain COL) protein is Succinate--CoA ligase [ADP-forming] subunit alpha.